Here is a 632-residue protein sequence, read N- to C-terminus: tRNA-guanine(15) transglycosylase (632 aa).

Catalysis depends on Asp86, which acts as the Nucleophile. 2 residues coordinate substrate: Asp121 and Gly186. Positions 553–628 (AMRVTVSKES…IAVKVHEGRD (76 aa)) constitute a PUA domain.

This sequence belongs to the archaeosine tRNA-ribosyltransferase family. Zn(2+) is required as a cofactor.

It catalyses the reaction guanosine(15) in tRNA + 7-cyano-7-deazaguanine = 7-cyano-7-carbaguanosine(15) in tRNA + guanine. It participates in tRNA modification; archaeosine-tRNA biosynthesis. Its function is as follows. Exchanges the guanine residue with 7-cyano-7-deazaguanine (preQ0) at position 15 in the dihydrouridine loop (D-loop) of archaeal tRNAs. In Thermoplasma acidophilum (strain ATCC 25905 / DSM 1728 / JCM 9062 / NBRC 15155 / AMRC-C165), this protein is tRNA-guanine(15) transglycosylase.